The following is a 377-amino-acid chain: Chaperone protein DnaJ (377 aa).

Residues 5 to 70 (DCYEVLGISR…QKKAAYDQYG (66 aa)) form the J domain. Residues 133 to 211 (GISKEIQIPT…CHGHGRYERS (79 aa)) form a CR-type zinc finger. Zn(2+) is bound by residues Cys-146, Cys-149, Cys-163, Cys-166, Cys-185, Cys-188, Cys-199, and Cys-202. CXXCXGXG motif repeat units follow at residues 146–153 (CEQCNGSG), 163–170 (CGTCYGQG), 185–192 (CPTCRGQG), and 199–206 (CHKCHGHG).

The protein belongs to the DnaJ family. As to quaternary structure, homodimer. Zn(2+) is required as a cofactor.

It is found in the cytoplasm. Functionally, participates actively in the response to hyperosmotic and heat shock by preventing the aggregation of stress-denatured proteins and by disaggregating proteins, also in an autonomous, DnaK-independent fashion. Unfolded proteins bind initially to DnaJ; upon interaction with the DnaJ-bound protein, DnaK hydrolyzes its bound ATP, resulting in the formation of a stable complex. GrpE releases ADP from DnaK; ATP binding to DnaK triggers the release of the substrate protein, thus completing the reaction cycle. Several rounds of ATP-dependent interactions between DnaJ, DnaK and GrpE are required for fully efficient folding. Also involved, together with DnaK and GrpE, in the DNA replication of plasmids through activation of initiation proteins. This Psychromonas ingrahamii (strain DSM 17664 / CCUG 51855 / 37) protein is Chaperone protein DnaJ.